The primary structure comprises 103 residues: Small ribosomal subunit protein uS10 (103 aa).

This sequence belongs to the universal ribosomal protein uS10 family. Part of the 30S ribosomal subunit.

In terms of biological role, involved in the binding of tRNA to the ribosomes. The chain is Small ribosomal subunit protein uS10 from Picrophilus torridus (strain ATCC 700027 / DSM 9790 / JCM 10055 / NBRC 100828 / KAW 2/3).